A 139-amino-acid polypeptide reads, in one-letter code: Ribosomal RNA large subunit methyltransferase H (139 aa).

Residues Leu56, Gly88, and 107–112 (LSLMTF) each bind S-adenosyl-L-methionine.

This sequence belongs to the RNA methyltransferase RlmH family. In terms of assembly, homodimer.

It localises to the cytoplasm. The catalysed reaction is pseudouridine(1915) in 23S rRNA + S-adenosyl-L-methionine = N(3)-methylpseudouridine(1915) in 23S rRNA + S-adenosyl-L-homocysteine + H(+). Specifically methylates the pseudouridine at position 1915 (m3Psi1915) in 23S rRNA. The chain is Ribosomal RNA large subunit methyltransferase H from Coprothermobacter proteolyticus (strain ATCC 35245 / DSM 5265 / OCM 4 / BT).